The following is a 163-amino-acid chain: Small heat shock protein C1 (163 aa).

Residues 55 to 163 (MFYESSSIKS…EQDAKEITIN (109 aa)) enclose the sHSP domain.

This sequence belongs to the small heat shock protein (HSP20) family.

The protein is Small heat shock protein C1 (hspC1) of Rickettsia typhi (strain ATCC VR-144 / Wilmington).